Consider the following 370-residue polypeptide: Aminomethyltransferase (370 aa).

The protein belongs to the GcvT family. The glycine cleavage system is composed of four proteins: P, T, L and H.

The catalysed reaction is N(6)-[(R)-S(8)-aminomethyldihydrolipoyl]-L-lysyl-[protein] + (6S)-5,6,7,8-tetrahydrofolate = N(6)-[(R)-dihydrolipoyl]-L-lysyl-[protein] + (6R)-5,10-methylene-5,6,7,8-tetrahydrofolate + NH4(+). The glycine cleavage system catalyzes the degradation of glycine. In Clostridium botulinum (strain 657 / Type Ba4), this protein is Aminomethyltransferase.